A 570-amino-acid polypeptide reads, in one-letter code: 15-cis-phytoene desaturase, chloroplastic/chromoplastic (570 aa).

A chloroplast and chromoplast-targeting transit peptide spans 1-91 (MSIVGLVSVV…AQLSASFRSS (91 aa)). FAD contacts are provided by residues 104–120 (GAGLAGLSTAKYLADAG), alanine 108, 127–128 (ES), lysine 135, 152–153 (HI), and tyrosine 158. A substrate-binding site is contributed by arginine 293. Aspartate 524 is a binding site for FAD. Alanine 532 is a binding site for substrate. Methionine 534 contributes to the FAD binding site.

It belongs to the carotenoid/retinoid oxidoreductase family. Homotetramer. The cofactor is FAD. Expressed more strongly in flowers than in leaves.

The protein localises to the plastid. It is found in the chloroplast. Its subcellular location is the chromoplast. The protein resides in the membrane. It catalyses the reaction 2 a plastoquinone + 15-cis-phytoene = 9,9',15-tri-cis-zeta-carotene + 2 a plastoquinol. Its pathway is carotenoid biosynthesis; lycopene biosynthesis. Its function is as follows. Converts phytoene into zeta-carotene via the intermediary of phytofluene by the symmetrical introduction of two double bonds at the C-11 and C-11' positions of phytoene with a concomitant isomerization of two neighboring double bonds at the C9 and C9' positions from trans to cis. The protein is 15-cis-phytoene desaturase, chloroplastic/chromoplastic (PDS1) of Narcissus pseudonarcissus (Daffodil).